The primary structure comprises 406 residues: Probable endo-xylogalacturonan hydrolase A (406 aa).

Positions methionine 1–alanine 18 are cleaved as a signal peptide. PbH1 repeat units follow at residues alanine 183 to serine 213, serine 214 to proline 235, cysteine 237 to serine 257, and valine 299 to serine 320. The active-site Proton donor is aspartate 228. A glycan (N-linked (GlcNAc...) asparagine) is linked at asparagine 244. Histidine 251 is an active-site residue. Residue asparagine 301 is glycosylated (N-linked (GlcNAc...) asparagine).

The protein belongs to the glycosyl hydrolase 28 family.

Its subcellular location is the secreted. Pectinolytic enzyme involved in the degradation of xylogalacturonan (xga), a galacturonan backbone heavily substituted with xylose, and which is one important component of the hairy regions of pectin. Activity requires a galacturonic acid backbone substituted with xylose. This Neosartorya fischeri (strain ATCC 1020 / DSM 3700 / CBS 544.65 / FGSC A1164 / JCM 1740 / NRRL 181 / WB 181) (Aspergillus fischerianus) protein is Probable endo-xylogalacturonan hydrolase A (xghA).